We begin with the raw amino-acid sequence, 84 residues long: MIMAAGSTGERPFFEIITSIRYWIIHAVTLPAIFIAGFLFVYTGLAYDAFGTPRPDSYFQSSESKAPVVTQRYEAKSQLDLRTK.

The chain crosses the membrane as a helical span at residues 24–38; the sequence is IIHAVTLPAIFIAGF. Residue histidine 26 participates in heme binding.

Belongs to the PsbE/PsbF family. As to quaternary structure, heterodimer of an alpha subunit and a beta subunit. PSII is composed of 1 copy each of membrane proteins PsbA, PsbB, PsbC, PsbD, PsbE, PsbF, PsbH, PsbI, PsbJ, PsbK, PsbL, PsbM, PsbT, PsbX, PsbY, Psb30/Ycf12, peripheral proteins PsbO, CyanoQ (PsbQ), PsbU, PsbV and a large number of cofactors. It forms dimeric complexes. Heme b serves as cofactor.

The protein resides in the cellular thylakoid membrane. In terms of biological role, this b-type cytochrome is tightly associated with the reaction center of photosystem II (PSII). PSII is a light-driven water:plastoquinone oxidoreductase that uses light energy to abstract electrons from H(2)O, generating O(2) and a proton gradient subsequently used for ATP formation. It consists of a core antenna complex that captures photons, and an electron transfer chain that converts photonic excitation into a charge separation. The polypeptide is Cytochrome b559 subunit alpha (Prochlorococcus marinus (strain MIT 9301)).